A 283-amino-acid polypeptide reads, in one-letter code: ATP phosphoribosyltransferase (283 aa).

Belongs to the ATP phosphoribosyltransferase family. Long subfamily. It depends on Mg(2+) as a cofactor.

It is found in the cytoplasm. It carries out the reaction 1-(5-phospho-beta-D-ribosyl)-ATP + diphosphate = 5-phospho-alpha-D-ribose 1-diphosphate + ATP. It functions in the pathway amino-acid biosynthesis; L-histidine biosynthesis; L-histidine from 5-phospho-alpha-D-ribose 1-diphosphate: step 1/9. With respect to regulation, feedback inhibited by histidine. Catalyzes the condensation of ATP and 5-phosphoribose 1-diphosphate to form N'-(5'-phosphoribosyl)-ATP (PR-ATP). Has a crucial role in the pathway because the rate of histidine biosynthesis seems to be controlled primarily by regulation of HisG enzymatic activity. The sequence is that of ATP phosphoribosyltransferase from Salinibacter ruber (strain DSM 13855 / M31).